A 384-amino-acid polypeptide reads, in one-letter code: PqqA peptide cyclase (384 aa).

In terms of domain architecture, Radical SAM core spans 5 to 220; the sequence is VGLPLWLLAE…TNEYREKLKA (216 aa). 3 residues coordinate [4Fe-4S] cluster: cysteine 19, cysteine 23, and cysteine 26.

This sequence belongs to the radical SAM superfamily. PqqE family. In terms of assembly, interacts with PqqD. The interaction is necessary for activity of PqqE. [4Fe-4S] cluster serves as cofactor.

The catalysed reaction is [PQQ precursor protein] + S-adenosyl-L-methionine = E-Y cross-linked-[PQQ precursor protein] + 5'-deoxyadenosine + L-methionine + H(+). It functions in the pathway cofactor biosynthesis; pyrroloquinoline quinone biosynthesis. Catalyzes the cross-linking of a glutamate residue and a tyrosine residue in the PqqA protein as part of the biosynthesis of pyrroloquinoline quinone (PQQ). The chain is PqqA peptide cyclase from Acinetobacter baumannii (strain AB0057).